Consider the following 639-residue polypeptide: 1-deoxy-D-xylulose-5-phosphate synthase (639 aa).

Residues histidine 76 and 117 to 119 (AHS) contribute to the thiamine diphosphate site. Aspartate 148 provides a ligand contact to Mg(2+). Thiamine diphosphate is bound by residues 149–150 (GS), asparagine 181, tyrosine 288, and glutamate 370. Mg(2+) is bound at residue asparagine 181.

It belongs to the transketolase family. DXPS subfamily. In terms of assembly, homodimer. Mg(2+) is required as a cofactor. It depends on thiamine diphosphate as a cofactor.

It catalyses the reaction D-glyceraldehyde 3-phosphate + pyruvate + H(+) = 1-deoxy-D-xylulose 5-phosphate + CO2. The protein operates within metabolic intermediate biosynthesis; 1-deoxy-D-xylulose 5-phosphate biosynthesis; 1-deoxy-D-xylulose 5-phosphate from D-glyceraldehyde 3-phosphate and pyruvate: step 1/1. Its function is as follows. Catalyzes the acyloin condensation reaction between C atoms 2 and 3 of pyruvate and glyceraldehyde 3-phosphate to yield 1-deoxy-D-xylulose-5-phosphate (DXP). In Leptothrix cholodnii (strain ATCC 51168 / LMG 8142 / SP-6) (Leptothrix discophora (strain SP-6)), this protein is 1-deoxy-D-xylulose-5-phosphate synthase.